A 457-amino-acid polypeptide reads, in one-letter code: Cysteine--tRNA ligase (457 aa).

Cysteine 31 is a binding site for Zn(2+). Residues 33-43 (PTVYNYAHIGN) carry the 'HIGH' region motif. 3 residues coordinate Zn(2+): cysteine 211, histidine 236, and glutamate 240. Positions 269 to 273 (KMSKS) match the 'KMSKS' region motif. Lysine 272 serves as a coordination point for ATP.

It belongs to the class-I aminoacyl-tRNA synthetase family. In terms of assembly, monomer. Requires Zn(2+) as cofactor.

The protein localises to the cytoplasm. It carries out the reaction tRNA(Cys) + L-cysteine + ATP = L-cysteinyl-tRNA(Cys) + AMP + diphosphate. This Xanthomonas campestris pv. campestris (strain ATCC 33913 / DSM 3586 / NCPPB 528 / LMG 568 / P 25) protein is Cysteine--tRNA ligase.